A 142-amino-acid chain; its full sequence is Large ribosomal subunit protein uL11 (142 aa).

The protein belongs to the universal ribosomal protein uL11 family. Part of the ribosomal stalk of the 50S ribosomal subunit. Interacts with L10 and the large rRNA to form the base of the stalk. L10 forms an elongated spine to which L12 dimers bind in a sequential fashion forming a multimeric L10(L12)X complex. One or more lysine residues are methylated.

Forms part of the ribosomal stalk which helps the ribosome interact with GTP-bound translation factors. The chain is Large ribosomal subunit protein uL11 from Haemophilus influenzae (strain PittGG).